A 184-amino-acid polypeptide reads, in one-letter code: ATP synthase subunit b 1 (184 aa).

The chain crosses the membrane as a helical span at residues 36–55 (NILNLAILVGVLVFYGRKVV).

The protein belongs to the ATPase B chain family. As to quaternary structure, F-type ATPases have 2 components, F(1) - the catalytic core - and F(0) - the membrane proton channel. F(1) has five subunits: alpha(3), beta(3), gamma(1), delta(1), epsilon(1). F(0) has four main subunits: a(1), b(1), b'(1) and c(10-14). The alpha and beta chains form an alternating ring which encloses part of the gamma chain. F(1) is attached to F(0) by a central stalk formed by the gamma and epsilon chains, while a peripheral stalk is formed by the delta, b and b' chains.

It is found in the cellular thylakoid membrane. Its function is as follows. F(1)F(0) ATP synthase produces ATP from ADP in the presence of a proton or sodium gradient. F-type ATPases consist of two structural domains, F(1) containing the extramembraneous catalytic core and F(0) containing the membrane proton channel, linked together by a central stalk and a peripheral stalk. During catalysis, ATP synthesis in the catalytic domain of F(1) is coupled via a rotary mechanism of the central stalk subunits to proton translocation. Component of the F(0) channel, it forms part of the peripheral stalk, linking F(1) to F(0). This Crocosphaera subtropica (strain ATCC 51142 / BH68) (Cyanothece sp. (strain ATCC 51142)) protein is ATP synthase subunit b 1.